Consider the following 506-residue polypeptide: Ribose import ATP-binding protein RbsA 2 (506 aa).

ABC transporter domains follow at residues 7–242 (LEMR…VGRP) and 250–497 (ERDI…TGVN). An ATP-binding site is contributed by 39-46 (GENGAGKS).

It belongs to the ABC transporter superfamily. Ribose importer (TC 3.A.1.2.1) family. As to quaternary structure, the complex is composed of an ATP-binding protein (RbsA), two transmembrane proteins (RbsC) and a solute-binding protein (RbsB).

It localises to the cell inner membrane. It carries out the reaction D-ribose(out) + ATP + H2O = D-ribose(in) + ADP + phosphate + H(+). Functionally, part of the ABC transporter complex RbsABC involved in ribose import. Responsible for energy coupling to the transport system. The sequence is that of Ribose import ATP-binding protein RbsA 2 from Escherichia coli O157:H7.